The following is a 318-amino-acid chain: Fibronectin type III domain-containing protein 11 (318 aa).

The Fibronectin type-III domain maps to 210–307 (VVFDRKASAA…DSLTLHTKPE (98 aa)).

In Homo sapiens (Human), this protein is Fibronectin type III domain-containing protein 11 (FNDC11).